Reading from the N-terminus, the 115-residue chain is MNIMLTLLTNVTLASLLVLIAFWLPQLNAYSEKTSPYECGFDPMGSARLPFSMKFFLVAITFLLFDLEIALLLPLPWASQTNNLKTMLTMALFLLILLAASLAYEWTQKGLEWAE.

The next 3 membrane-spanning stretches (helical) occupy residues 3–23 (IMLT…IAFW), 55–75 (FFLV…LLPL), and 86–106 (TMLT…AYEW).

This sequence belongs to the complex I subunit 3 family. In terms of assembly, core subunit of respiratory chain NADH dehydrogenase (Complex I) which is composed of 45 different subunits. Interacts with TMEM186. Interacts with TMEM242.

It is found in the mitochondrion inner membrane. It catalyses the reaction a ubiquinone + NADH + 5 H(+)(in) = a ubiquinol + NAD(+) + 4 H(+)(out). Its function is as follows. Core subunit of the mitochondrial membrane respiratory chain NADH dehydrogenase (Complex I) which catalyzes electron transfer from NADH through the respiratory chain, using ubiquinone as an electron acceptor. Essential for the catalytic activity of complex I. The polypeptide is NADH-ubiquinone oxidoreductase chain 3 (Sus scrofa (Pig)).